The chain runs to 300 residues: Sulfate adenylyltransferase subunit 2 (300 aa).

The tract at residues 281 to 300 is disordered; that stretch reads RAIDRDEAGSMEKKKREGYF.

It belongs to the PAPS reductase family. CysD subfamily. Heterodimer composed of CysD, the smaller subunit, and CysN.

It catalyses the reaction sulfate + ATP + H(+) = adenosine 5'-phosphosulfate + diphosphate. Its pathway is sulfur metabolism; hydrogen sulfide biosynthesis; sulfite from sulfate: step 1/3. With CysN forms the ATP sulfurylase (ATPS) that catalyzes the adenylation of sulfate producing adenosine 5'-phosphosulfate (APS) and diphosphate, the first enzymatic step in sulfur assimilation pathway. APS synthesis involves the formation of a high-energy phosphoric-sulfuric acid anhydride bond driven by GTP hydrolysis by CysN coupled to ATP hydrolysis by CysD. The sequence is that of Sulfate adenylyltransferase subunit 2 from Brucella melitensis biotype 2 (strain ATCC 23457).